The sequence spans 852 residues: Protein SEY1 (852 aa).

Over 1–738 (MNGHFAAVGN…KRSAIGGITQ (738 aa)) the chain is Cytoplasmic. Residues 47-283 (GFNYHLISVF…FVGGVFLPEY (237 aa)) enclose the GB1/RHD3-type G domain. 57–64 (GSQSTGKS) lines the GTP pocket. Residues 475–500 (QYRLFEKELDEVSARLRKEEMRRLAI) adopt a coiled-coil conformation. Residues 739–759 (VPLYFYIVLLIFGWNEIVMVL) form a helical membrane-spanning segment. At 760–762 (RNP) the chain is on the lumenal side. The chain crosses the membrane as a helical span at residues 763 to 783 (MLFMLLLVMGGGTYVAYTLNL). The Cytoplasmic portion of the chain corresponds to 784 to 852 (LGPMMQMANA…AQEVEEDDDI (69 aa)). The tract at residues 825–852 (RSQDNGIGMDRLDSRGKKAQEVEEDDDI) is disordered. Residues 834–845 (DRLDSRGKKAQE) show a composition bias toward basic and acidic residues.

Belongs to the TRAFAC class dynamin-like GTPase superfamily. GB1/RHD3 GTPase family. RHD3 subfamily.

It is found in the endoplasmic reticulum membrane. Cooperates with the reticulon proteins and tubule-shaping DP1 family proteins to generate and maintain the structure of the tubular endoplasmic reticulum network. Has GTPase activity, which is required for its function in ER organization. The chain is Protein SEY1 from Chaetomium globosum (strain ATCC 6205 / CBS 148.51 / DSM 1962 / NBRC 6347 / NRRL 1970) (Soil fungus).